The primary structure comprises 385 residues: DNA replication and repair protein RecF (385 aa).

30–37 lines the ATP pocket; the sequence is GPNGFGKT.

Belongs to the RecF family.

It is found in the cytoplasm. Its function is as follows. The RecF protein is involved in DNA metabolism; it is required for DNA replication and normal SOS inducibility. RecF binds preferentially to single-stranded, linear DNA. It also seems to bind ATP. The protein is DNA replication and repair protein RecF of Mycobacterium marinum (strain ATCC BAA-535 / M).